A 231-amino-acid chain; its full sequence is Small ribosomal subunit protein uS5 (231 aa).

Residues 1–63 (MADLENKTVK…KSVDRANKVK (63 aa)) form a disordered region. Residues 29-60 (KRTESGAKKQIWEKRSAHDSKDMPKKSVDRAN) show a composition bias toward basic and acidic residues. An S5 DRBM domain is found at 75 to 138 (FSEKVVNISR…KDARNHLISV (64 aa)).

It belongs to the universal ribosomal protein uS5 family. In terms of assembly, part of the 30S ribosomal subunit. Contacts proteins S4 and S8.

With S4 and S12 plays an important role in translational accuracy. Functionally, located at the back of the 30S subunit body where it stabilizes the conformation of the head with respect to the body. The chain is Small ribosomal subunit protein uS5 from Mycoplasmopsis agalactiae (strain NCTC 10123 / CIP 59.7 / PG2) (Mycoplasma agalactiae).